We begin with the raw amino-acid sequence, 349 residues long: Isopentenyl-diphosphate delta-isomerase (349 aa).

Position 6 to 7 (6 to 7 (RK)) interacts with substrate. FMN-binding positions include 62-64 (AMT), Ser-93, and Asn-122. Residue Gln-152 coordinates substrate. Residue Glu-153 participates in Mg(2+) binding. FMN-binding positions include Lys-184, Thr-214, 259-261 (GVR), and 280-281 (AG).

It belongs to the IPP isomerase type 2 family. In terms of assembly, homooctamer. Dimer of tetramers. Requires FMN as cofactor. NADPH serves as cofactor. It depends on Mg(2+) as a cofactor.

It is found in the cytoplasm. The catalysed reaction is isopentenyl diphosphate = dimethylallyl diphosphate. Its function is as follows. Involved in the biosynthesis of isoprenoids. Catalyzes the 1,3-allylic rearrangement of the homoallylic substrate isopentenyl (IPP) to its allylic isomer, dimethylallyl diphosphate (DMAPP). The polypeptide is Isopentenyl-diphosphate delta-isomerase (Geobacillus sp. (strain WCH70)).